Consider the following 1460-residue polypeptide: MKEVVVSETPKRIKGLEFSALSAADIVAQSEVEVSTRDLFDLEKDRAPKANGALDPKMGVSSSSLECATCHGNLASCHGHFGHLKLALPVFHIGYFKATIQILQGICKNCSAILLSETDKRQFLHELRRPGVDNLRRMGILKKILDQCKKQRRCLHCGALNGVVKKAAAGAGSAALKIIHDTFRWVGKKSAPEKDIWVGEWKEVLAHNPELERYVKRCMDDLNPLKTLNLFKQIKSADCELLGIDATVPSGRPETYIWRYLPAPPVCIRPSVMMQDSPASNEDDLTVKLTEIVWTSSLIKAGLDKGISINNMMEHWDYLQLTVAMYINSDSVNPAMLPGSSNGGGKVKPIRGFCQRLKGKQGRFRGNLSGKRVDFSGRTVISPDPNLSIDEVAVPDRVAKVLTYPEKVTRYNRHKLQELIVNGPNVHPGANYLLKRNEDARRNLRYGDRMKLAKNLQIGDVVERHLEDGDVVLFNRQPSLHRLSILSHYAKIRPWRTFRLNECVCTPYNADFDGDEMNLHVPQTEEARAEAINLMGVKNNLLTPKSGEPIIAATQDFITGSYLISHKDSFYDRATLTQLLSMMSDGIEHFDIPPPAIMKPYYLWTGKQVFSLLIKPNHNSPVVINLDAKNKVFVPPKSKSLPNEMSQNDGFVIIRGSQILSGVMDKSVLGDGKKHSVFYTILRDYGPQEAANAMNRMAKLCARFLGNRGFSIGINDVTPADDLKQKKEELVEIAYHKCDELITLFNKGELETQPGCNEEQTLEAKIGGLLSKVREEVGDVCINELDNWNAPLIMATCGSKGSTLNVSQMVAVVGQQIISGNRVPDGFQDRSLPHFPKNSKTPQSKGFVRNSFFSGLSPPEFLFHAISGREGLVDTAVKTAETGYMSRRLMKSLEDLSCQYDNTVRTSANGIVQFTYGGDGLDPLEMEGNAQPVNFNRSWDHAYNITFNNQDKGLLPYAIMETANEILGPLEERLVRYDNSGCLVKREDLNKAEYVDQYDAERDFYHSLREYINGKATALANLRKSRGMLGLLEPPAKELQGIDPDETVPDNVKTSVSQLYRISEKSVRKFLEIALFKYRKARLEPGTAIGAIGAQSIGEPGTQMTLKTFHFAGVASMNVTLGVPRIKEIINASKVISTPIINAVLVNDNDERAARVVKGRVEKTLLSDVAFYVQDVYKDNLSFIQVRIDLGTIDKLQLELTIEDIAVAITRASKLKIQASDVNIIGKDRIAINVFPEGYKAKSISTSAKEPSENDVFYRMQQLRRALPDVVVKGLPDISRAVINIRDDGKRELLVEGYGLRDVMCTDGVIGSRTTTNHVLEVFSVLGIEAARYSIIREINYTMSNHGMSVDPRHIQLLGDVMTYKGEVLGITRFGLSKMRDSVLQLASFEKTTDHLFDAAFYMKKDAVEGVSECIILGQTMSIGTGSFKVVKGTNISEKDLVPKRCLFESLSNEAALKAN.

Zn(2+) contacts are provided by cysteine 67, cysteine 70, cysteine 77, histidine 80, cysteine 107, cysteine 110, and cysteine 154. Residues aspartate 511, aspartate 513, and aspartate 515 each contribute to the Mg(2+) site. A bridging helix region spans residues 858–870 (PPEFLFHAISGRE).

The protein belongs to the RNA polymerase beta' chain family. In terms of assembly, component of the RNA polymerase III (Pol III) complex consisting of 17 subunits.

The protein resides in the nucleus. It catalyses the reaction RNA(n) + a ribonucleoside 5'-triphosphate = RNA(n+1) + diphosphate. Its function is as follows. DNA-dependent RNA polymerase catalyzes the transcription of DNA into RNA using the four ribonucleoside triphosphates as substrates. Largest and catalytic core component of RNA polymerase III which synthesizes small RNAs, such as 5S rRNA and tRNAs. Forms the polymerase active center together with the second largest subunit. A single-stranded DNA template strand of the promoter is positioned within the central active site cleft of Pol III. A bridging helix emanates from RPC1 and crosses the cleft near the catalytic site and is thought to promote translocation of Pol III by acting as a ratchet that moves the RNA-DNA hybrid through the active site by switching from straight to bent conformations at each step of nucleotide addition. The chain is DNA-directed RNA polymerase III subunit RPC1 (RPO31) from Saccharomyces cerevisiae (strain ATCC 204508 / S288c) (Baker's yeast).